The sequence spans 156 residues: Small ribosomal subunit protein uS7 (156 aa).

It belongs to the universal ribosomal protein uS7 family. As to quaternary structure, part of the 30S ribosomal subunit. Contacts proteins S9 and S11.

One of the primary rRNA binding proteins, it binds directly to 16S rRNA where it nucleates assembly of the head domain of the 30S subunit. Is located at the subunit interface close to the decoding center, probably blocks exit of the E-site tRNA. The protein is Small ribosomal subunit protein uS7 of Geobacter sulfurreducens (strain ATCC 51573 / DSM 12127 / PCA).